Reading from the N-terminus, the 177-residue chain is Large ribosomal subunit protein uL10 (177 aa).

Belongs to the universal ribosomal protein uL10 family. Part of the ribosomal stalk of the 50S ribosomal subunit. The N-terminus interacts with L11 and the large rRNA to form the base of the stalk. The C-terminus forms an elongated spine to which L12 dimers bind in a sequential fashion forming a multimeric L10(L12)X complex.

Its function is as follows. Forms part of the ribosomal stalk, playing a central role in the interaction of the ribosome with GTP-bound translation factors. The polypeptide is Large ribosomal subunit protein uL10 (Variovorax paradoxus (strain S110)).